A 210-amino-acid polypeptide reads, in one-letter code: Fibroblast growth factor 21 (210 aa).

The N-terminal stretch at 1-28 (MEWMRSRVGTLGLWVRLLLAVFLLGVYQ) is a signal peptide. Residues 144–210 (PLRLPQKDSP…LQGRSPSYAS (67 aa)) are disordered.

The protein belongs to the heparin-binding growth factors family. In terms of assembly, interacts (via C-terminus) with KLB; this interaction is direct. Interacts with FGFR4. Most abundantly expressed in the liver, also expressed in the thymus at lower levels. Expressed in skeletal muscle (at protein level). Secreted in plasma (at protein level).

It localises to the secreted. Stimulates glucose uptake in differentiated adipocytes via the induction of glucose transporter SLC2A1/GLUT1 expression (but not SLC2A4/GLUT4 expression). Activity probably requires the presence of KLB. Regulates systemic glucose homeostasis and insulin sensitivity. In Mus musculus (Mouse), this protein is Fibroblast growth factor 21 (Fgf21).